Reading from the N-terminus, the 753-residue chain is Enhancer of polycomb-like protein 1 (753 aa).

2 disordered regions span residues 1-75 (MAAA…RDLH) and 429-490 (VRTE…LPPA). Over residues 46–71 (LDSNELEPSQVHHLNSNASSSSTQQP) the composition is skewed to polar residues. Residues 429–449 (VRTEDEEREKKREKKKQDQEL) show a composition bias toward basic and acidic residues. A compositionally biased stretch (low complexity) spans 450-463 (ALKQQQALQQQQQQ).

This sequence belongs to the enhancer of polycomb family. In terms of assembly, component of the NuA4 histone acetyltransferase complex.

The protein resides in the nucleus. Functionally, component of the NuA4 histone acetyltransferase complex which is involved in transcriptional activation of selected genes principally by acetylation of nucleosomal histone H4 and H2A. The NuA4 complex is also involved in DNA repair. Involved in gene silencing by neighboring heterochromatin, blockage of the silencing spreading along the chromosome, and required for cell cycle progression through G2/M. This Candida albicans (strain SC5314 / ATCC MYA-2876) (Yeast) protein is Enhancer of polycomb-like protein 1 (EPL1).